Consider the following 448-residue polypeptide: DEAD-box ATP-dependent RNA helicase CshB (448 aa).

Residues 4–32 (HPFEQFNLESSLIDAVKDLNFEKPTEIQN) carry the Q motif motif. In terms of domain architecture, Helicase ATP-binding spans 35-206 (IPRILKRTNL…NKYLSHPEYV (172 aa)). 48–55 (SQTGTGKS) serves as a coordination point for ATP. The short motif at 154-157 (DEAD) is the DEAD box element. A Helicase C-terminal domain is found at 236–386 (NLIDILNPYL…EVKAHNQRQA (151 aa)). Basic residues predominate over residues 400–418 (NKVRSKIKNKVKPGYKKKF). The segment at 400–448 (NKVRSKIKNKVKPGYKKKFKQEVEKMKRQERKQFSKQQNRQKRKQNKKG) is disordered. The segment covering 419–432 (KQEVEKMKRQERKQ) has biased composition (basic and acidic residues). The segment covering 438–448 (NRQKRKQNKKG) has biased composition (basic residues).

This sequence belongs to the DEAD box helicase family. CshB subfamily.

The protein resides in the cytoplasm. It carries out the reaction ATP + H2O = ADP + phosphate + H(+). Its function is as follows. Probable DEAD-box RNA helicase. May work in conjunction with the cold shock proteins to ensure proper initiation of transcription at low and optimal temperatures. In Staphylococcus aureus (strain NCTC 8325 / PS 47), this protein is DEAD-box ATP-dependent RNA helicase CshB.